A 222-amino-acid chain; its full sequence is uncharacterized protein (222 aa).

The next 4 helical transmembrane spans lie at Leu-25–Ala-45, Leu-80–Tyr-100, Phe-111–Leu-131, and Leu-160–Phe-180.

It is found in the cell membrane. This is an uncharacterized protein from Bacillus subtilis (strain 168).